The following is a 452-amino-acid chain: Coproporphyrinogen III oxidase (452 aa).

Residues 10–15, 36–37, 58–61, V242, W390, and 426–428 contribute to the FAD site; these read GGGISG, EP, GAEA, and IGV.

It belongs to the protoporphyrinogen/coproporphyrinogen oxidase family. Coproporphyrinogen III oxidase subfamily. FAD serves as cofactor.

The protein localises to the cytoplasm. It catalyses the reaction coproporphyrinogen III + 3 O2 = coproporphyrin III + 3 H2O2. It participates in porphyrin-containing compound metabolism; protoheme biosynthesis. Involved in coproporphyrin-dependent heme b biosynthesis. Catalyzes the oxidation of coproporphyrinogen III to coproporphyrin III. In Mycobacterium bovis (strain ATCC BAA-935 / AF2122/97), this protein is Coproporphyrinogen III oxidase.